Here is a 479-residue protein sequence, read N- to C-terminus: Glutamate--tRNA ligase (479 aa).

The short motif at 21-31 is the 'HIGH' region element; that stretch reads PSPTGYLHVGG. The short motif at 248–252 is the 'KMSKS' region element; that stretch reads KLSKR. Lys-251 contributes to the ATP binding site.

This sequence belongs to the class-I aminoacyl-tRNA synthetase family. Glutamate--tRNA ligase type 1 subfamily. In terms of assembly, monomer.

The protein resides in the cytoplasm. The enzyme catalyses tRNA(Glu) + L-glutamate + ATP = L-glutamyl-tRNA(Glu) + AMP + diphosphate. Its function is as follows. Catalyzes the attachment of glutamate to tRNA(Glu) in a two-step reaction: glutamate is first activated by ATP to form Glu-AMP and then transferred to the acceptor end of tRNA(Glu). This is Glutamate--tRNA ligase from Haemophilus ducreyi (strain 35000HP / ATCC 700724).